We begin with the raw amino-acid sequence, 466 residues long: Asparagine--tRNA ligase (466 aa).

Belongs to the class-II aminoacyl-tRNA synthetase family. As to quaternary structure, homodimer.

It localises to the cytoplasm. The catalysed reaction is tRNA(Asn) + L-asparagine + ATP = L-asparaginyl-tRNA(Asn) + AMP + diphosphate + H(+). In Psychromonas ingrahamii (strain DSM 17664 / CCUG 51855 / 37), this protein is Asparagine--tRNA ligase.